The sequence spans 273 residues: Type III pantothenate kinase (273 aa).

Residue 5–12 (DVGNSHVV) participates in ATP binding. Substrate is bound at residue 112–115 (GTDL). Asp-114 functions as the Proton acceptor in the catalytic mechanism. Residue Asp-134 participates in K(+) binding. Residue Thr-137 coordinates ATP. Thr-189 contributes to the substrate binding site.

The protein belongs to the type III pantothenate kinase family. As to quaternary structure, homodimer. Requires NH4(+) as cofactor. The cofactor is K(+).

It localises to the cytoplasm. It carries out the reaction (R)-pantothenate + ATP = (R)-4'-phosphopantothenate + ADP + H(+). The protein operates within cofactor biosynthesis; coenzyme A biosynthesis; CoA from (R)-pantothenate: step 1/5. Its function is as follows. Catalyzes the phosphorylation of pantothenate (Pan), the first step in CoA biosynthesis. The protein is Type III pantothenate kinase of Treponema pallidum (strain Nichols).